Consider the following 645-residue polypeptide: UvrABC system protein C (645 aa).

The GIY-YIG domain occupies 12–91 (TGPGVYLYKN…IKQRKPRFNV (80 aa)). In terms of domain architecture, UVR spans 202–237 (ADLERSLEVRMQEAAAAEQFELAAKYRDLLVTLHQL).

The protein belongs to the UvrC family. As to quaternary structure, interacts with UvrB in an incision complex.

The protein localises to the cytoplasm. Its function is as follows. The UvrABC repair system catalyzes the recognition and processing of DNA lesions. UvrC both incises the 5' and 3' sides of the lesion. The N-terminal half is responsible for the 3' incision and the C-terminal half is responsible for the 5' incision. The chain is UvrABC system protein C from Acidobacterium capsulatum (strain ATCC 51196 / DSM 11244 / BCRC 80197 / JCM 7670 / NBRC 15755 / NCIMB 13165 / 161).